Reading from the N-terminus, the 424-residue chain is Glutamyl-tRNA reductase (424 aa).

Residues 51–54 (TCNR), Ser-99, 104–106 (EDQ), and Gln-110 contribute to the substrate site. The Nucleophile role is filled by Cys-52. 179 to 184 (GTGEMG) is a binding site for NADP(+).

This sequence belongs to the glutamyl-tRNA reductase family. As to quaternary structure, homodimer.

The catalysed reaction is (S)-4-amino-5-oxopentanoate + tRNA(Glu) + NADP(+) = L-glutamyl-tRNA(Glu) + NADPH + H(+). It functions in the pathway porphyrin-containing compound metabolism; protoporphyrin-IX biosynthesis; 5-aminolevulinate from L-glutamyl-tRNA(Glu): step 1/2. Catalyzes the NADPH-dependent reduction of glutamyl-tRNA(Glu) to glutamate 1-semialdehyde (GSA). This is Glutamyl-tRNA reductase from Methanospirillum hungatei JF-1 (strain ATCC 27890 / DSM 864 / NBRC 100397 / JF-1).